A 475-amino-acid polypeptide reads, in one-letter code: tRNA-2-methylthio-N(6)-dimethylallyladenosine synthase (475 aa).

The 118-residue stretch at 2–119 folds into the MTTase N-terminal domain; sequence AKLHITTWGC…LPEMINQIRS (118 aa). [4Fe-4S] cluster is bound by residues cysteine 11, cysteine 48, cysteine 82, cysteine 156, cysteine 160, and cysteine 163. In terms of domain architecture, Radical SAM core spans 142 to 374; the sequence is KAEGPTAFVS…QQRINHQAMQ (233 aa). Residues 377–440 form the TRAM domain; that stretch reads RLMLGTEQRI…SNSLRGEVIR (64 aa).

This sequence belongs to the methylthiotransferase family. MiaB subfamily. As to quaternary structure, monomer. The cofactor is [4Fe-4S] cluster.

The protein resides in the cytoplasm. It catalyses the reaction N(6)-dimethylallyladenosine(37) in tRNA + (sulfur carrier)-SH + AH2 + 2 S-adenosyl-L-methionine = 2-methylsulfanyl-N(6)-dimethylallyladenosine(37) in tRNA + (sulfur carrier)-H + 5'-deoxyadenosine + L-methionine + A + S-adenosyl-L-homocysteine + 2 H(+). Catalyzes the methylthiolation of N6-(dimethylallyl)adenosine (i(6)A), leading to the formation of 2-methylthio-N6-(dimethylallyl)adenosine (ms(2)i(6)A) at position 37 in tRNAs that read codons beginning with uridine. This chain is tRNA-2-methylthio-N(6)-dimethylallyladenosine synthase, found in Haemophilus ducreyi (strain 35000HP / ATCC 700724).